A 126-amino-acid chain; its full sequence is Protein ApaG (126 aa).

An ApaG domain is found at 2–126 (SALDDSIRVE…FRLALPGLLH (125 aa)).

The protein is Protein ApaG of Shewanella sp. (strain MR-7).